Reading from the N-terminus, the 87-residue chain is Small ribosomal subunit protein bS18 (87 aa).

The protein belongs to the bacterial ribosomal protein bS18 family. As to quaternary structure, part of the 30S ribosomal subunit. Forms a tight heterodimer with protein bS6.

Its function is as follows. Binds as a heterodimer with protein bS6 to the central domain of the 16S rRNA, where it helps stabilize the platform of the 30S subunit. This chain is Small ribosomal subunit protein bS18, found in Nitratidesulfovibrio vulgaris (strain DSM 19637 / Miyazaki F) (Desulfovibrio vulgaris).